Consider the following 318-residue polypeptide: Thymidylate synthase (318 aa).

DUMP-binding positions include R25 and 180-181 (RR). The active-site Nucleophile is C200. Residues 220 to 223 (RSAD), N231, and 261 to 263 (HIY) each bind dUMP. Position 223 (D223) interacts with (6R)-5,10-methylene-5,6,7,8-tetrahydrofolate. A317 is a (6R)-5,10-methylene-5,6,7,8-tetrahydrofolate binding site.

This sequence belongs to the thymidylate synthase family. Bacterial-type ThyA subfamily. As to quaternary structure, homodimer.

It localises to the cytoplasm. It catalyses the reaction dUMP + (6R)-5,10-methylene-5,6,7,8-tetrahydrofolate = 7,8-dihydrofolate + dTMP. The protein operates within pyrimidine metabolism; dTTP biosynthesis. Catalyzes the reductive methylation of 2'-deoxyuridine-5'-monophosphate (dUMP) to 2'-deoxythymidine-5'-monophosphate (dTMP) while utilizing 5,10-methylenetetrahydrofolate (mTHF) as the methyl donor and reductant in the reaction, yielding dihydrofolate (DHF) as a by-product. This enzymatic reaction provides an intracellular de novo source of dTMP, an essential precursor for DNA biosynthesis. The protein is Thymidylate synthase of Ligilactobacillus salivarius (strain UCC118) (Lactobacillus salivarius).